Reading from the N-terminus, the 389-residue chain is Phosphoglycerate kinase (389 aa).

Substrate is bound by residues 21–23 (DLN), Arg-36, 59–62 (HLGR), Arg-112, and Arg-145. ATP-binding positions include Lys-196, Glu-313, and 342–345 (GGDT).

Belongs to the phosphoglycerate kinase family. In terms of assembly, monomer.

The protein resides in the cytoplasm. It carries out the reaction (2R)-3-phosphoglycerate + ATP = (2R)-3-phospho-glyceroyl phosphate + ADP. Its pathway is carbohydrate degradation; glycolysis; pyruvate from D-glyceraldehyde 3-phosphate: step 2/5. This Mannheimia succiniciproducens (strain KCTC 0769BP / MBEL55E) protein is Phosphoglycerate kinase.